The chain runs to 600 residues: Fructan 1-exohydrolase (600 aa).

A signal peptide spans M1–A27. The active site involves D73. 3 N-linked (GlcNAc...) asparagine glycosylation sites follow: N166, N234, and N246. A disulfide bridge connects residues C444 and C490. N565 is a glycosylation site (N-linked (GlcNAc...) asparagine).

This sequence belongs to the glycosyl hydrolase 32 family.

The enzyme catalyses Hydrolysis of terminal, non-reducing (2-&gt;1)-linked beta-D-fructofuranose residues in fructans.. Inhibited by sucrose. Its function is as follows. Hydrolyzes inulin-type beta-(2,1)-fructans. May play a role as a beta-(2,1)-trimmer during graminan biosynthesis. This is Fructan 1-exohydrolase from Leymus chinensis (Chinese lyme grass).